The sequence spans 221 residues: Thymidylate kinase (221 aa).

12–19 serves as a coordination point for ATP; sequence GIDGAGKS.

This sequence belongs to the thymidylate kinase family.

It carries out the reaction dTMP + ATP = dTDP + ADP. Phosphorylation of dTMP to form dTDP in both de novo and salvage pathways of dTTP synthesis. The polypeptide is Thymidylate kinase (Paracidovorax citrulli (strain AAC00-1) (Acidovorax citrulli)).